Consider the following 168-residue polypeptide: Photosystem I assembly protein Ycf3 (168 aa).

TPR repeat units follow at residues 35–68 (AFTY…EIDP), 72–105 (SYIL…NPFL), and 120–153 (GEQA…TPGN).

Belongs to the Ycf3 family.

Its subcellular location is the plastid. The protein resides in the chloroplast thylakoid membrane. Its function is as follows. Essential for the assembly of the photosystem I (PSI) complex. May act as a chaperone-like factor to guide the assembly of the PSI subunits. This is Photosystem I assembly protein Ycf3 from Liriodendron tulipifera (Tuliptree).